We begin with the raw amino-acid sequence, 189 residues long: Peptidyl-tRNA hydrolase (189 aa).

Phenylalanine 15 is a binding site for tRNA. Catalysis depends on histidine 20, which acts as the Proton acceptor. Tyrosine 65, asparagine 67, and asparagine 113 together coordinate tRNA.

Belongs to the PTH family. Monomer.

The protein localises to the cytoplasm. It catalyses the reaction an N-acyl-L-alpha-aminoacyl-tRNA + H2O = an N-acyl-L-amino acid + a tRNA + H(+). Functionally, hydrolyzes ribosome-free peptidyl-tRNAs (with 1 or more amino acids incorporated), which drop off the ribosome during protein synthesis, or as a result of ribosome stalling. In terms of biological role, catalyzes the release of premature peptidyl moieties from peptidyl-tRNA molecules trapped in stalled 50S ribosomal subunits, and thus maintains levels of free tRNAs and 50S ribosomes. This chain is Peptidyl-tRNA hydrolase, found in Phytoplasma australiense.